Here is a 93-residue protein sequence, read N- to C-terminus: Small ribosomal subunit protein uS19 (93 aa).

It belongs to the universal ribosomal protein uS19 family.

Its function is as follows. Protein S19 forms a complex with S13 that binds strongly to the 16S ribosomal RNA. The polypeptide is Small ribosomal subunit protein uS19 (Campylobacter fetus subsp. fetus (strain 82-40)).